The chain runs to 196 residues: uncharacterized protein (196 aa).

This is an uncharacterized protein from Sinorhizobium fredii (strain NBRC 101917 / NGR234).